We begin with the raw amino-acid sequence, 285 residues long: HTH-type transcriptional regulator MurR (285 aa).

The HTH rpiR-type domain maps to 1–77; it reads MLYLTKISNA…MALIGEYSAS (77 aa). The segment at residues 37-56 is a DNA-binding region (H-T-H motif); that stretch reads SRQMAKQLGISQSSIVKFAQ. One can recognise an SIS domain in the interval 128–268; sequence IIEVISKAPF…FVGLVQLNDV (141 aa).

In terms of assembly, homotetramer.

Its pathway is amino-sugar metabolism; N-acetylmuramate degradation [regulation]. Represses the expression of the murPQ operon involved in the uptake and degradation of N-acetylmuramic acid (MurNAc). Binds to two adjacent inverted repeats within the operator region. MurNAc 6-phosphate, the substrate of MurQ, is the specific inducer that weakens binding of MurR to the operator. This chain is HTH-type transcriptional regulator MurR, found in Escherichia coli O139:H28 (strain E24377A / ETEC).